Here is a 290-residue protein sequence, read N- to C-terminus: Fructose-1,6-bisphosphatase class 1 (290 aa).

Mg(2+) contacts are provided by Glu-78, Asp-96, Leu-98, and Asp-99. Substrate-binding positions include 99–102, Tyr-201, and Lys-226; that span reads DGSS. Glu-232 provides a ligand contact to Mg(2+).

The protein belongs to the FBPase class 1 family. Homotetramer. Mg(2+) is required as a cofactor.

The protein localises to the cytoplasm. The catalysed reaction is beta-D-fructose 1,6-bisphosphate + H2O = beta-D-fructose 6-phosphate + phosphate. The protein operates within carbohydrate biosynthesis; gluconeogenesis. This chain is Fructose-1,6-bisphosphatase class 1, found in Helicobacter pylori (strain Shi470).